Here is a 273-residue protein sequence, read N- to C-terminus: 3-methyl-2-oxobutanoate hydroxymethyltransferase (273 aa).

The Mg(2+) site is built by Asp-53 and Asp-92. 3-methyl-2-oxobutanoate contacts are provided by residues 53 to 54 (DS), Asp-92, and Lys-122. Glu-124 provides a ligand contact to Mg(2+). Catalysis depends on Glu-191, which acts as the Proton acceptor.

It belongs to the PanB family. As to quaternary structure, homodecamer; pentamer of dimers. Mg(2+) serves as cofactor.

It localises to the cytoplasm. The enzyme catalyses 3-methyl-2-oxobutanoate + (6R)-5,10-methylene-5,6,7,8-tetrahydrofolate + H2O = 2-dehydropantoate + (6S)-5,6,7,8-tetrahydrofolate. It functions in the pathway cofactor biosynthesis; (R)-pantothenate biosynthesis; (R)-pantoate from 3-methyl-2-oxobutanoate: step 1/2. Its function is as follows. Catalyzes the reversible reaction in which hydroxymethyl group from 5,10-methylenetetrahydrofolate is transferred onto alpha-ketoisovalerate to form ketopantoate. The chain is 3-methyl-2-oxobutanoate hydroxymethyltransferase from Bacteroides thetaiotaomicron (strain ATCC 29148 / DSM 2079 / JCM 5827 / CCUG 10774 / NCTC 10582 / VPI-5482 / E50).